We begin with the raw amino-acid sequence, 494 residues long: Glycerol kinase 1 (494 aa).

Residue T12 participates in ADP binding. ATP contacts are provided by T12, T13, and S14. T12 contributes to the sn-glycerol 3-phosphate binding site. R16 contacts ADP. Residues R82, E83, Y134, and D243 each coordinate sn-glycerol 3-phosphate. The glycerol site is built by R82, E83, Y134, D243, and Q244. T265 and G308 together coordinate ADP. The ATP site is built by T265, G308, Q312, and G408. G408 and N412 together coordinate ADP.

This sequence belongs to the FGGY kinase family.

The catalysed reaction is glycerol + ATP = sn-glycerol 3-phosphate + ADP + H(+). It participates in polyol metabolism; glycerol degradation via glycerol kinase pathway; sn-glycerol 3-phosphate from glycerol: step 1/1. With respect to regulation, inhibited by fructose 1,6-bisphosphate (FBP). Its function is as follows. Key enzyme in the regulation of glycerol uptake and metabolism. Catalyzes the phosphorylation of glycerol to yield sn-glycerol 3-phosphate. The chain is Glycerol kinase 1 from Pseudomonas aeruginosa (strain ATCC 15692 / DSM 22644 / CIP 104116 / JCM 14847 / LMG 12228 / 1C / PRS 101 / PAO1).